Reading from the N-terminus, the 251-residue chain is Cell division protein ZapD (251 aa).

Belongs to the ZapD family. As to quaternary structure, interacts with FtsZ.

It localises to the cytoplasm. Cell division factor that enhances FtsZ-ring assembly. Directly interacts with FtsZ and promotes bundling of FtsZ protofilaments, with a reduction in FtsZ GTPase activity. The protein is Cell division protein ZapD of Burkholderia vietnamiensis (strain G4 / LMG 22486) (Burkholderia cepacia (strain R1808)).